We begin with the raw amino-acid sequence, 493 residues long: Cobyric acid synthase (493 aa).

In terms of domain architecture, GATase cobBQ-type spans 252–440 (PVKIVVLRLR…IHGIFESDSL (189 aa)). Residue C333 is the Nucleophile of the active site. H432 is an active-site residue.

Belongs to the CobB/CobQ family. CobQ subfamily.

It functions in the pathway cofactor biosynthesis; adenosylcobalamin biosynthesis. Its function is as follows. Catalyzes amidations at positions B, D, E, and G on adenosylcobyrinic A,C-diamide. NH(2) groups are provided by glutamine, and one molecule of ATP is hydrogenolyzed for each amidation. This Thermodesulfovibrio yellowstonii (strain ATCC 51303 / DSM 11347 / YP87) protein is Cobyric acid synthase.